The chain runs to 201 residues: Lipopolysaccharide core heptose(II)-phosphate phosphatase (201 aa).

The N-terminal stretch at 1–35 (MLAFTLRFIKNKRYLATLAGALVIIAGLTSQHAWS) is a signal peptide.

This sequence belongs to the phosphoglycerate mutase family. Ais subfamily.

Its subcellular location is the periplasm. It participates in bacterial outer membrane biogenesis; lipopolysaccharide metabolism. Catalyzes the dephosphorylation of heptose(II) of the outer membrane lipopolysaccharide core. In Salmonella schwarzengrund (strain CVM19633), this protein is Lipopolysaccharide core heptose(II)-phosphate phosphatase.